The chain runs to 220 residues: Uracil phosphoribosyltransferase 2 (220 aa).

77–80 (ARDI) serves as a coordination point for GTP. Residues Arg-87 and Arg-113 each coordinate 5-phospho-alpha-D-ribose 1-diphosphate. Arg-134 is a binding site for GTP. Residues Asp-140 and 140–148 (DPLLATGNS) contribute to the 5-phospho-alpha-D-ribose 1-diphosphate site. Residue Tyr-204 participates in D-ribose 5-phosphate binding. Uracil is bound by residues Val-205 and 210–212 (GDF). Asp-211 serves as a coordination point for 5-phospho-alpha-D-ribose 1-diphosphate.

Belongs to the UPRTase family. It depends on Mg(2+) as a cofactor.

It catalyses the reaction UMP + diphosphate = 5-phospho-alpha-D-ribose 1-diphosphate + uracil. It participates in pyrimidine metabolism; UMP biosynthesis via salvage pathway; UMP from uracil: step 1/1. Its activity is regulated as follows. Allosterically activated by GTP. In terms of biological role, catalyzes the conversion of uracil and 5-phospho-alpha-D-ribose 1-diphosphate (PRPP) to UMP and diphosphate. The sequence is that of Uracil phosphoribosyltransferase 2 from Schizosaccharomyces pombe (strain 972 / ATCC 24843) (Fission yeast).